A 429-amino-acid polypeptide reads, in one-letter code: ATP-dependent RNA helicase RhlB (429 aa).

The Q motif motif lies at 9-37; it reads EKFAQMGLEPEVLAGLESKGFHYCTPIQA. One can recognise a Helicase ATP-binding domain in the interval 40 to 219; it reads LPLLVEGHDL…YEHMNHPEHV (180 aa). An ATP-binding site is contributed by 53–60; that stretch reads AQTGTGKT. Residues 165–168 carry the DEAD box motif; that stretch reads DEAD. The Helicase C-terminal domain occupies 243–390; it reads KMLLLLSLME…VSKYDREALL (148 aa). A disordered region spans residues 395 to 429; it reads APKRVVRNRQPVNRNMRDRQGGGNSNNRRRPPRKS.

It belongs to the DEAD box helicase family. RhlB subfamily. In terms of assembly, component of the RNA degradosome, which is a multiprotein complex involved in RNA processing and mRNA degradation.

The protein resides in the cytoplasm. It catalyses the reaction ATP + H2O = ADP + phosphate + H(+). In terms of biological role, DEAD-box RNA helicase involved in RNA degradation. Has RNA-dependent ATPase activity and unwinds double-stranded RNA. In Aeromonas salmonicida (strain A449), this protein is ATP-dependent RNA helicase RhlB.